The following is a 97-amino-acid chain: Large ribosomal subunit protein bL27 (97 aa).

Positions 1–12 are excised as a propeptide; that stretch reads MLKMNLANLQLF. The disordered stretch occupies residues 14–37; it reads HKKGGGSTSNGRDSQAKRLGAKAA.

Belongs to the bacterial ribosomal protein bL27 family. In terms of processing, the N-terminus is cleaved by ribosomal processing cysteine protease Prp.

The protein is Large ribosomal subunit protein bL27 of Streptococcus uberis (strain ATCC BAA-854 / 0140J).